The sequence spans 74 residues: Putative membrane protein insertion efficiency factor (74 aa).

Belongs to the UPF0161 family.

Its subcellular location is the cell inner membrane. Could be involved in insertion of integral membrane proteins into the membrane. The chain is Putative membrane protein insertion efficiency factor from Syntrophus aciditrophicus (strain SB).